An 87-amino-acid polypeptide reads, in one-letter code: Keratin-associated protein 7-1 (87 aa).

Residues 43-84 (GCGCNGYSSLGYSFGGSNINNLGGCYGGSFYRPWGSGSGFGY) are 11 X 2 AA repeats of G-[YCGS].

It belongs to the KRTAP type 7 family. In terms of assembly, interacts with hair keratins. Expressed in the upper portion of the hair cortex.

In the hair cortex, hair keratin intermediate filaments are embedded in an interfilamentous matrix, consisting of hair keratin-associated proteins (KRTAP), which are essential for the formation of a rigid and resistant hair shaft through their extensive disulfide bond cross-linking with abundant cysteine residues of hair keratins. The matrix proteins include the high-sulfur and high-glycine-tyrosine keratins. This is Keratin-associated protein 7-1 (KRTAP7-1) from Homo sapiens (Human).